A 124-amino-acid polypeptide reads, in one-letter code: Large ribosomal subunit protein bL12 (124 aa).

Belongs to the bacterial ribosomal protein bL12 family. As to quaternary structure, homodimer. Part of the ribosomal stalk of the 50S ribosomal subunit. Forms a multimeric L10(L12)X complex, where L10 forms an elongated spine to which 2 to 4 L12 dimers bind in a sequential fashion. Binds GTP-bound translation factors.

In terms of biological role, forms part of the ribosomal stalk which helps the ribosome interact with GTP-bound translation factors. Is thus essential for accurate translation. This is Large ribosomal subunit protein bL12 from Cupriavidus taiwanensis (strain DSM 17343 / BCRC 17206 / CCUG 44338 / CIP 107171 / LMG 19424 / R1) (Ralstonia taiwanensis (strain LMG 19424)).